Reading from the N-terminus, the 457-residue chain is Argininosuccinate lyase (457 aa).

The protein belongs to the lyase 1 family. Argininosuccinate lyase subfamily.

It localises to the cytoplasm. It catalyses the reaction 2-(N(omega)-L-arginino)succinate = fumarate + L-arginine. It participates in amino-acid biosynthesis; L-arginine biosynthesis; L-arginine from L-ornithine and carbamoyl phosphate: step 3/3. This chain is Argininosuccinate lyase, found in Sodalis glossinidius (strain morsitans).